The chain runs to 858 residues: Bifunctional uridylyltransferase/uridylyl-removing enzyme (858 aa).

Positions 1-324 (MSASVAEPPP…PATSGVTRVL (324 aa)) are uridylyltransferase. The segment at 325–681 (SPGRFVEKQG…ARPSPVGDAL (357 aa)) is uridylyl-removing. One can recognise an HD domain in the interval 443–565 (VDQHILMVLR…VGSERRLTAL (123 aa)). ACT domains lie at 682–761 (QVLV…PEPS) and 790–858 (ILSV…AIAV).

Belongs to the GlnD family. Requires Mg(2+) as cofactor.

The catalysed reaction is [protein-PII]-L-tyrosine + UTP = [protein-PII]-uridylyl-L-tyrosine + diphosphate. It carries out the reaction [protein-PII]-uridylyl-L-tyrosine + H2O = [protein-PII]-L-tyrosine + UMP + H(+). Its activity is regulated as follows. Uridylyltransferase (UTase) activity is inhibited by glutamine, while glutamine activates uridylyl-removing (UR) activity. In terms of biological role, modifies, by uridylylation and deuridylylation, the PII regulatory proteins (GlnB and homologs), in response to the nitrogen status of the cell that GlnD senses through the glutamine level. Under low glutamine levels, catalyzes the conversion of the PII proteins and UTP to PII-UMP and PPi, while under higher glutamine levels, GlnD hydrolyzes PII-UMP to PII and UMP (deuridylylation). Thus, controls uridylylation state and activity of the PII proteins, and plays an important role in the regulation of nitrogen assimilation and metabolism. This is Bifunctional uridylyltransferase/uridylyl-removing enzyme from Burkholderia pseudomallei (strain 1106a).